Here is a 1202-residue protein sequence, read N- to C-terminus: Putative late blight resistance protein homolog R1B-8 (1202 aa).

Coiled-coil stretches lie at residues 345–368 (RYSD…ESLQ) and 437–459 (LRMN…RLLN). Residues 426 to 741 (IARTSSQLAR…ISESFIKSCE (316 aa)) enclose the NB-ARC domain. 471–478 (GMPGLGKT) is a binding site for ATP. LRR repeat units lie at residues 865 to 889 (FKFL…LFYL), 908 to 936 (LWNL…VWDM), 1011 to 1036 (PIRL…ISAP), 1040 to 1059 (YLKL…TADH), 1060 to 1084 (LKHL…VSNG), 1086 to 1111 (FPQL…VFPN), and 1128 to 1151 (SCFM…VVQS).

The protein belongs to the disease resistance NB-LRR family.

The protein resides in the cytoplasm. The protein localises to the membrane. Confers resistance to late blight (Phytophthora infestans) races carrying the avirulence gene Avr1. Resistance proteins guard the plant against pathogens that contain an appropriate avirulence protein via an indirect interaction with this avirulence protein. That triggers a defense system including the hypersensitive response, which restricts the pathogen growth. The sequence is that of Putative late blight resistance protein homolog R1B-8 (R1B-8) from Solanum demissum (Wild potato).